An 87-amino-acid polypeptide reads, in one-letter code: U3-theraphotoxin-Hhn1a 5 (87 aa).

The N-terminal stretch at 1–24 (MVNMKASMFLTFAGLVLLFVVCYA) is a signal peptide. Residues 25–52 (SESEEKEFPKEMLSSIFAVDNDFKQEER) constitute a propeptide that is removed on maturation. Disulfide bonds link C54/C67, C61/C72, and C66/C79.

The protein belongs to the neurotoxin 10 (Hwtx-1) family. 51 (Hntx-8) subfamily. Hntx-8 sub-subfamily. Expressed by the venom gland.

Its subcellular location is the secreted. In terms of biological role, ion channel inhibitor. The polypeptide is U3-theraphotoxin-Hhn1a 5 (Cyriopagopus hainanus (Chinese bird spider)).